Consider the following 1132-residue polypeptide: APC membrane recruitment protein 1 (1132 aa).

The residue at position 1 (Met-1) is an N-acetylmethionine. A compositionally biased stretch (polar residues) spans 1–21; it reads MESQQDEAVQTKGASTSSDAQ. Disordered stretches follow at residues 1 to 256, 268 to 301, 338 to 423, 469 to 505, 674 to 699, 736 to 770, 924 to 949, and 1038 to 1132; these read MESQ…ACKN, FMQP…NPPN, SMTD…GEEN, GLGE…DSGE, TSGG…EPDW, MQEA…GNAT, ELQA…DSPL, and SQAS…NLAK. The segment covering 24–35 has biased composition (basic and acidic residues); sequence GAEKGAKNKTTE. Positions 121–133 are enriched in low complexity; the sequence is SKSSAQFPSSQSA. 3 stretches are compositionally biased toward basic and acidic residues: residues 195–208, 218–229, and 281–290; these read KELE…HEHV, EIFRDTRKENAK, and EEPHTSETEG. Residues 372–423 show a composition bias toward acidic residues; it reads ALPDDDDNDDEEEEEEEEEEEEEEEEEEEEEEEEEEEELLEDEEEVKDGEEN. 2 stretches are compositionally biased toward polar residues: residues 475-486 and 677-696; these read TPQSDQQESAPN and GSQT…SSSE. 2 stretches are compositionally biased toward acidic residues: residues 756–765 and 931–941; these read EEPEEEEEEK and DSDEEGEEEEG. Composition is skewed to polar residues over residues 1059-1072 and 1115-1132; these read SCSS…QSQA and ASLS…NLAK.

This sequence belongs to the Amer family. In terms of assembly, interacts with CTNNB1, AXIN1, LRP6, KEAP1, APC and BTRC. Interacts with SCF (SKP1-CUL1-F-box protein) E3 ubiquitin-protein ligase complexes containing BTRC and/or FBXW11. Identified in the beta-catenin destruction complex containing CTNNB1, APC, AXIN1 and AXIN2. Interacts with WT1. In terms of tissue distribution, expressed in kidney.

The protein resides in the cytoplasm. The protein localises to the cell membrane. Its subcellular location is the nucleus. Regulator of the canonical Wnt signaling pathway. Acts by specifically binding phosphatidylinositol 4,5-bisphosphate (PtdIns(4,5)P2), translocating to the cell membrane and interacting with key regulators of the canonical Wnt signaling pathway, such as components of the beta-catenin destruction complex. Acts both as a positive and negative regulator of the Wnt signaling pathway, depending on the context: acts as a positive regulator by promoting LRP6 phosphorylation. Also acts as a negative regulator by acting as a scaffold protein for the beta-catenin destruction complex and promoting stabilization of Axin at the cell membrane. Promotes CTNNB1 ubiquitination and degradation. Involved in kidney development. The sequence is that of APC membrane recruitment protein 1 (Amer1) from Mus musculus (Mouse).